We begin with the raw amino-acid sequence, 435 residues long: Probable long-chain-alcohol O-fatty-acyltransferase 11 (435 aa).

Helical transmembrane passes span 7–27, 36–56, 59–79, 120–140, 149–169, 200–220, 238–258, 263–283, 300–320, 363–383, and 406–426; these read NLIK…YVPT, FLSV…FASV, SGYT…LFSF, PIEV…SVVL, IYPI…LEIL, DFWG…DVYA, LGVF…FFYI, PTGE…AYDA, CLIL…WLFF, FFTG…IGFV, and FFIG…IGFV.

Belongs to the wax synthase family.

Its subcellular location is the membrane. It carries out the reaction a long chain fatty alcohol + a fatty acyl-CoA = a wax ester + CoA. Its function is as follows. Catalyzes the final step in the synthesis of long-chain linear esters (waxes). This chain is Probable long-chain-alcohol O-fatty-acyltransferase 11, found in Arabidopsis thaliana (Mouse-ear cress).